The primary structure comprises 277 residues: Glycerol-3-phosphate acyltransferase (277 aa).

A run of 5 helical transmembrane segments spans residues 3 to 23 (LFIFLILVGYLMGSINSAIIV), 55 to 75 (IMVMVFDALKGILPVILAKLL), 79 to 99 (PVTVAFTALAAVVGHMYPVFF), 111 to 131 (IGALLAFHFVIGVMVAATWLL), and 155 to 175 (LILVGNLNIFPPLFMITILVL). Residues 207-277 (SPATSAEQEF…PKTKTVKEKE (71 aa)) form a disordered region. Positions 216–239 (FPGKEVIDTNIDETEKTEQAEAVK) are enriched in basic and acidic residues. Basic residues-rich tracts occupy residues 240-253 (KPKVKKATTKAKKT) and 262-271 (KPKSTKPKTK).

This sequence belongs to the PlsY family. Probably interacts with PlsX.

It localises to the cell inner membrane. It catalyses the reaction an acyl phosphate + sn-glycerol 3-phosphate = a 1-acyl-sn-glycero-3-phosphate + phosphate. It functions in the pathway lipid metabolism; phospholipid metabolism. Catalyzes the transfer of an acyl group from acyl-phosphate (acyl-PO(4)) to glycerol-3-phosphate (G3P) to form lysophosphatidic acid (LPA). This enzyme utilizes acyl-phosphate as fatty acyl donor, but not acyl-CoA or acyl-ACP. The protein is Glycerol-3-phosphate acyltransferase of Legionella pneumophila (strain Corby).